The chain runs to 100 residues: Proline-rich protein 15-like protein (100 aa).

Residues 29–51 (YAQTEGGAEPPGPDAGDPHSDFN) are disordered.

It belongs to the PRR15 family.

The chain is Proline-rich protein 15-like protein (Prr15l) from Mus musculus (Mouse).